We begin with the raw amino-acid sequence, 408 residues long: Peptidase T (408 aa).

His81 contributes to the Zn(2+) binding site. The active site involves Asp83. Asp142 contacts Zn(2+). Glu176 functions as the Proton acceptor in the catalytic mechanism. Zn(2+) contacts are provided by Glu177, Asp199, and His381.

This sequence belongs to the peptidase M20B family. It depends on Zn(2+) as a cofactor.

Its subcellular location is the cytoplasm. The enzyme catalyses Release of the N-terminal residue from a tripeptide.. Cleaves the N-terminal amino acid of tripeptides. This chain is Peptidase T, found in Streptococcus gordonii (strain Challis / ATCC 35105 / BCRC 15272 / CH1 / DL1 / V288).